We begin with the raw amino-acid sequence, 278 residues long: Putative glycosyltransferase EpsE (278 aa).

Belongs to the glycosyltransferase 2 family.

May be involved in the production of the exopolysaccharide (EPS) component of the extracellular matrix during biofilm formation. EPS is responsible for the adhesion of chains of cells into bundles. Required for biofilm maintenance. The sequence is that of Putative glycosyltransferase EpsE (epsE) from Bacillus subtilis (strain 168).